The primary structure comprises 90 residues: Probable Fe(2+)-trafficking protein (90 aa).

The protein belongs to the Fe(2+)-trafficking protein family. In terms of assembly, monomer.

Could be a mediator in iron transactions between iron acquisition and iron-requiring processes, such as synthesis and/or repair of Fe-S clusters in biosynthetic enzymes. This chain is Probable Fe(2+)-trafficking protein, found in Pectobacterium atrosepticum (strain SCRI 1043 / ATCC BAA-672) (Erwinia carotovora subsp. atroseptica).